The chain runs to 111 residues: Aspartate 1-decarboxylase (111 aa).

Residue Ser25 is the Schiff-base intermediate with substrate; via pyruvic acid of the active site. Ser25 carries the pyruvic acid (Ser) modification. Thr57 contacts substrate. Tyr58 serves as the catalytic Proton donor. 73-75 contributes to the substrate binding site; the sequence is GPA.

It belongs to the PanD family. Heterooctamer of four alpha and four beta subunits. It depends on pyruvate as a cofactor. In terms of processing, is synthesized initially as an inactive proenzyme, which is activated by self-cleavage at a specific serine bond to produce a beta-subunit with a hydroxyl group at its C-terminus and an alpha-subunit with a pyruvoyl group at its N-terminus.

Its subcellular location is the cytoplasm. It carries out the reaction L-aspartate + H(+) = beta-alanine + CO2. The protein operates within cofactor biosynthesis; (R)-pantothenate biosynthesis; beta-alanine from L-aspartate: step 1/1. Functionally, catalyzes the pyruvoyl-dependent decarboxylation of aspartate to produce beta-alanine. The sequence is that of Aspartate 1-decarboxylase from Francisella tularensis subsp. novicida (strain U112).